The following is a 139-amino-acid chain: Small ribosomal subunit protein uS12 (139 aa).

Positions 118–139 (AGVANRNQSRSRYGTKKPKPKS) are disordered. Basic residues predominate over residues 130–139 (YGTKKPKPKS).

This sequence belongs to the universal ribosomal protein uS12 family. As to quaternary structure, part of the 30S ribosomal subunit. Contacts proteins S8 and S17. May interact with IF1 in the 30S initiation complex.

Its function is as follows. With S4 and S5 plays an important role in translational accuracy. In terms of biological role, interacts with and stabilizes bases of the 16S rRNA that are involved in tRNA selection in the A site and with the mRNA backbone. Located at the interface of the 30S and 50S subunits, it traverses the body of the 30S subunit contacting proteins on the other side and probably holding the rRNA structure together. The combined cluster of proteins S8, S12 and S17 appears to hold together the shoulder and platform of the 30S subunit. The polypeptide is Small ribosomal subunit protein uS12 (Mycoplasma mobile (strain ATCC 43663 / 163K / NCTC 11711) (Mesomycoplasma mobile)).